The primary structure comprises 360 residues: MPLLPYALTRPFLFGLDAEAAHELIIDLLARGQRTPLQWAWCNQTVDDPIELAGLRFPNRVGLAAGLDKNARCIDALGAMGFGFVEAGTVTPQAQPGNPRPRMFRLPEARALINRLGFNNAGLQAFVHNLQQSRLRAAGSALRLGLNIGKNASTPMAQASSDYLACLEGVYPHADYVALNISSPNTQNLRTLQGDAALDHLLGAIAERRATLAARHGRRVPVFVKIAPDLDEAQLSLMAATLQRHGIDGVIATNTTIDRAVVQGQRHAQESGGLSGAPVLQASNQVIGQLRAALGKGFPIIGVGGIMSAEDAVSKIRAGADLVQIYTGLIYEGPALVVQAARAIKAMGGCGPVIALPNRS.

FMN-binding positions include 65 to 69 and threonine 89; that span reads AGLDK. Position 69 (lysine 69) interacts with substrate. Substrate is bound at residue 114-118; it reads NRLGF. FMN-binding residues include asparagine 147 and asparagine 180. Residue asparagine 180 coordinates substrate. Residue serine 183 is the Nucleophile of the active site. Asparagine 185 lines the substrate pocket. 2 residues coordinate FMN: lysine 225 and threonine 253. 254-255 contacts substrate; that stretch reads NT. FMN-binding positions include glycine 276, glycine 305, and 326–327; that span reads YT.

Belongs to the dihydroorotate dehydrogenase family. Type 2 subfamily. Monomer. FMN is required as a cofactor.

The protein localises to the cell membrane. It catalyses the reaction (S)-dihydroorotate + a quinone = orotate + a quinol. Its pathway is pyrimidine metabolism; UMP biosynthesis via de novo pathway; orotate from (S)-dihydroorotate (quinone route): step 1/1. Functionally, catalyzes the conversion of dihydroorotate to orotate with quinone as electron acceptor. In Verminephrobacter eiseniae (strain EF01-2), this protein is Dihydroorotate dehydrogenase (quinone).